The chain runs to 217 residues: tRNA (guanine-N(7)-)-methyltransferase (217 aa).

Positions 44, 69, 96, and 118 each coordinate S-adenosyl-L-methionine. Asp118 is a catalytic residue. Position 122 (Lys122) interacts with substrate. Positions Arg124–Arg129 are interaction with RNA. Substrate-binding positions include Asp154 and Thr193 to Glu196.

Belongs to the class I-like SAM-binding methyltransferase superfamily. TrmB family.

The enzyme catalyses guanosine(46) in tRNA + S-adenosyl-L-methionine = N(7)-methylguanosine(46) in tRNA + S-adenosyl-L-homocysteine. It participates in tRNA modification; N(7)-methylguanine-tRNA biosynthesis. Catalyzes the formation of N(7)-methylguanine at position 46 (m7G46) in tRNA. This is tRNA (guanine-N(7)-)-methyltransferase from Lactococcus lactis subsp. lactis (strain IL1403) (Streptococcus lactis).